The following is a 1521-amino-acid chain: MDFIDNQAEESDASSGHSDDEEPQSKKMKMAKEKSKRKKKMVASSDEDEDDDDDEEENRKEMQGFIADDDDEEEDAKSEKSEKSRHSGEDELDDEDLDLINENYDIRETKKQNRVQLGDSSDEDEPIRRPNHEDDDLLSERGSDDGDRRKDRGRGDRGGYGSESERSEDDFIEDDGDAPRRHRKRHRGDENLPEGAEDDARDVFGVEDFNLDEFYDDDDGEDGLEDEEEEIIEDDGEGGEIKIRRKKDTTKKSTLLESIEPSEIDRGFLLPGDKKIAKEDLPERFQLRRTPVTEADDDELESEALWIIKYAFEEGTVTNQADLDQDDKLDCIMNLDPSVYEDRKKAVIKSIKKVLQFIRVRSNSFEPTFIGFYRKEDIDNLLTMNNLWRVYDFDEKWCHLSEKKNKIYDLMRRMREYQELSDDLTAKRRPISDADLMDTKYAETLEQLTDIHANFQLLYGALLDDMIRWEKGRLTGEEEEQEYRVKFKSSIRNDKYQMCVENGIGELAGRFGLTAKQFSENLNWKKHDIEQDPMLPLEAAEEYVCPAFSDSDMVLNGAKFMLAKEISRQPQVRHSVRQEFRQSAHFWIKPTKKGRDTIDQTHPLYDKRYIKSKPVRSLTAEEFLFYHKAKEDGLVDVLIMYESEEDQDSNNYLVNKYLSDSIFQKDEYTENVEQWNSVRDECVNMAITEMLVPYMRDELYNTILEEAKTAVAKKCRKEFASRISRSGYLPDFDNNDDDDDGMDQHGARRIMAVCYPTERDEASFGVMVDENGAIVDYLRMVHFTKRTFGGGNNGLRKAESMDLFKKFVQRRKPHAIGLNIEDMECTRLKRDLEEAVADLFSQNLIYKPIPVFLMDNEAAKVYMRSNVSLAENPDHPPTLRQALSLARLLLDPIPEYAHLWNIDEDIFCLSLHPLQRDIDQEQLALVLSHELVNKVNEEGVDINKCAEFPHYTNMLQFTCGLGPRKATDLLKSIKANDNLIESRSKLVVGCKLGPKVFMNCAGFIKIDTIKVSEKTDAYVEVLDGSRVHPETYEWARKMAVDALEVDDSADPTAALQEIMESPDRLRDLDLDAFADELSRQGFGEKKSTLYDISSELSARYKDLRQPFQEPTGELLYDLLARSGKEIREGAKVLGTVQSVQYRKVDKDAADSMLPDVGEDGLFTCPCCKSFTSSAPGGIQEHMLGDSRQGGCPGTPVGIRVRFDNGMTGFCPNKNISSSHVDNPLTRVKINQPYYFKVLKLDKERFSLFLSCKSSDLKEDDLSQRDQYWDEHQYQADLELMKSESKKKTEANTRVKRVIAHPNFHNVSYEAATKMLDEMDWSECIIRPSANKDSGLSVTWKICDRVYHNFFVKESAKDQVFSIGRQLSVGGEDFEDLDELIARFVQPMIQISHEITTHKYFFPNGTCEETEAVEQFVREKKRELGRSPYVFSASYRQPCQFCISYMFDNTERIRHEYFKIVPHGVRFRHQNFDTLDRMMAWFKRHFHEPPIELRRSAIPAPQYRVGAPPAAPYYPPQFVGYH.

Residues M1–G238 are disordered. Residues K26–M41 show a composition bias toward basic residues. The short motif at K26–V42 is the Nuclear localization signal element. Acidic residues-rich tracts occupy residues S45–E56 and A67–A76. Positions K77 to E89 are enriched in basic and acidic residues. Positions D90–L99 are enriched in acidic residues. Over residues P126–R157 the composition is skewed to basic and acidic residues. Acidic residues-rich tracts occupy residues R166–G176, N191–A200, and F209–G238. The region spanning L1183–K1252 is the S1 motif domain. The 90-residue stretch at H1300–Q1389 folds into the SH2 domain.

This sequence belongs to the SPT6 family. Interacts with glp-1 and lin-12. As to expression, abundant in embryos, and less abundant in larvae.

It localises to the nucleus. Functionally, histone H3-H4 chaperone that plays a role in maintenance of chromatin structure during RNA polymerase II transcription elongation. Required for several aspects of morphogenesis of C.elegans, including regulation of division in the germline and gut and specification of ventral-uterine precursor cell fate. The chain is Suppressor of Ty 6 homolog (emb-5) from Caenorhabditis elegans.